A 746-amino-acid chain; its full sequence is Long-chain-alcohol oxidase FAO3 (746 aa).

Residues 139-159 (ILTPIRAAFVYIKVAFLFCFF) traverse the membrane as a helical segment. Residue 233–248 (CDVVVVGSGSGGGVAA) coordinates FAD. Residue His677 is the Proton acceptor of the active site.

It belongs to the GMC oxidoreductase family.

It localises to the membrane. The catalysed reaction is a long-chain primary fatty alcohol + O2 = a long-chain fatty aldehyde + H2O2. Long-chain fatty alcohol oxidase involved in the omega-oxidation pathway of lipid degradation. This is Long-chain-alcohol oxidase FAO3 (FAO3) from Arabidopsis thaliana (Mouse-ear cress).